Reading from the N-terminus, the 85-residue chain is Large ribosomal subunit protein bL27 (85 aa).

The tract at residues 1-22 is disordered; it reads MAHKKGVGSTRNGRDSESKRLG.

The protein belongs to the bacterial ribosomal protein bL27 family.

The chain is Large ribosomal subunit protein bL27 from Geobacter metallireducens (strain ATCC 53774 / DSM 7210 / GS-15).